Here is a 494-residue protein sequence, read N- to C-terminus: Neuronal acetylcholine receptor subunit alpha-6 (494 aa).

A signal peptide spans 1–25 (MLTSKGQGFLHGGLCLWLCVFTPFF). Over 26–239 (KGCVGCATEE…ITYSFYIRRL (214 aa)) the chain is Extracellular. N-linked (GlcNAc...) asparagine glycans are attached at residues asparagine 54 and asparagine 171. 2 disulfide bridges follow: cysteine 158–cysteine 172 and cysteine 222–cysteine 223. The next 3 helical transmembrane spans lie at 240-264 (PMFY…VFYL), 272-290 (VTLC…LVIT), and 306-327 (YLLF…VLNI). At 328–465 (HYRTPTTHTM…WKYVAMVVDR (138 aa)) the chain is on the cytoplasmic side. Serine 401 carries the phosphoserine modification. A helical transmembrane segment spans residues 466 to 484 (VFLWVFIIVCVFGTAGLFL).

It belongs to the ligand-gated ion channel (TC 1.A.9) family. Acetylcholine receptor (TC 1.A.9.1) subfamily. Alpha-6/CHRNA6 sub-subfamily. In terms of assembly, neuronal AChR is composed of two different types of subunits: alpha and non-alpha (beta). CHRNA6/alpha-6 subunit can be combined to CHRNB2/beta-2, CHRNA4/alpha-4 and CHRNB3/beta-3 to give rise to functional receptors. Heteropentamers containing CHRNB3 have an stoichiometry of (CHRNA6:CHRNB2)2:CHRNB3. Interacts with LYPD6.

Its subcellular location is the synaptic cell membrane. The catalysed reaction is Ca(2+)(in) = Ca(2+)(out). It catalyses the reaction K(+)(in) = K(+)(out). The enzyme catalyses Na(+)(in) = Na(+)(out). Activated by a myriad of ligands such as acetylcholine, cytisine and nicotine. CHRNA6 nAChR activity is inhibited by the antagonists alpha-conotoxin MII and PIA, a small disulfide-constrained peptides from cone snails. In terms of biological role, component of neuronal acetylcholine receptors (nAChRs) that function as pentameric, ligand-gated cation channels with high calcium permeability among other activities. nAChRs are excitatory neurotrasnmitter receptors formed by a collection of nAChR subunits known to mediate synaptic transmission in the nervous system and the neuromuscular junction. Each nAchR subunit confers differential attributes to channel properties, including activation, deactivation and desensitization kinetics, pH sensitivity, cation permeability, and binding to allosteric modulators. CHRNA6 forms pentameric channels with CHRNB2, CHRNB3 and CHRNA4 that exhibit high sensitivity to ACh and nicotine and are predominantly expressed in only a few brain areas, including dopaminergic neurons, norepirephrine neurons and cells of the visual system. nAChrs containing CHRNA6 subunits mediate endogenous cholinergic modulation of dopamine and gamma-aminobutyric acid (GABA) release in response to nicotine at nerve terminals. This Pan troglodytes (Chimpanzee) protein is Neuronal acetylcholine receptor subunit alpha-6 (CHRNA6).